A 364-amino-acid polypeptide reads, in one-letter code: Lipoyl synthase, mitochondrial (364 aa).

Residues C99, C104, C110, C130, C134, C137, and S345 each coordinate [4Fe-4S] cluster. Residues 116-334 enclose the Radical SAM core domain; that stretch reads HSTQTATIML…EQRGNELGFL (219 aa).

The protein belongs to the radical SAM superfamily. Lipoyl synthase family. Requires [4Fe-4S] cluster as cofactor.

The protein resides in the mitochondrion. It catalyses the reaction [[Fe-S] cluster scaffold protein carrying a second [4Fe-4S](2+) cluster] + N(6)-octanoyl-L-lysyl-[protein] + 2 oxidized [2Fe-2S]-[ferredoxin] + 2 S-adenosyl-L-methionine + 4 H(+) = [[Fe-S] cluster scaffold protein] + N(6)-[(R)-dihydrolipoyl]-L-lysyl-[protein] + 4 Fe(3+) + 2 hydrogen sulfide + 2 5'-deoxyadenosine + 2 L-methionine + 2 reduced [2Fe-2S]-[ferredoxin]. It functions in the pathway protein modification; protein lipoylation via endogenous pathway; protein N(6)-(lipoyl)lysine from octanoyl-[acyl-carrier-protein]: step 2/2. In terms of biological role, catalyzes the radical-mediated insertion of two sulfur atoms into the C-6 and C-8 positions of the octanoyl moiety bound to the lipoyl domains of lipoate-dependent enzymes, thereby converting the octanoylated domains into lipoylated derivatives. In Drosophila mojavensis (Fruit fly), this protein is Lipoyl synthase, mitochondrial.